The following is a 291-amino-acid chain: Small ribosomal subunit biogenesis GTPase RsgA (291 aa).

A CP-type G domain is found at 63–221 (KNELKRPPVS…IADTPGFSAL (159 aa)). GTP-binding positions include 112-115 (TKKD) and 164-172 (GQSGVGKST). Residues cysteine 245, cysteine 250, histidine 252, and cysteine 258 each coordinate Zn(2+).

The protein belongs to the TRAFAC class YlqF/YawG GTPase family. RsgA subfamily. As to quaternary structure, monomer. Associates with 30S ribosomal subunit, binds 16S rRNA. The cofactor is Zn(2+).

It localises to the cytoplasm. In terms of biological role, one of several proteins that assist in the late maturation steps of the functional core of the 30S ribosomal subunit. Helps release RbfA from mature subunits. May play a role in the assembly of ribosomal proteins into the subunit. Circularly permuted GTPase that catalyzes slow GTP hydrolysis, GTPase activity is stimulated by the 30S ribosomal subunit. This is Small ribosomal subunit biogenesis GTPase RsgA from Staphylococcus aureus (strain Mu50 / ATCC 700699).